Consider the following 111-residue polypeptide: Prothymosin alpha-A (111 aa).

The disordered stretch occupies residues 1–111 (MSDTAVDASV…IKKQKTDEDD (111 aa)). Positions 9–42 (SVEKTTKDLKAKEKEVVEEAENGKDKPTNGKAEN) are enriched in basic and acidic residues. 2 stretches are compositionally biased toward acidic residues: residues 43–81 (EENG…DEVE) and 90–100 (EDDEDDDDDDV). Positions 101 to 111 (EIKKQKTDEDD) are enriched in basic and acidic residues.

This sequence belongs to the pro/parathymosin family.

The protein resides in the nucleus. The polypeptide is Prothymosin alpha-A (ptma-a) (Xenopus laevis (African clawed frog)).